An 853-amino-acid polypeptide reads, in one-letter code: MICAL-like protein 1 (853 aa).

The Calponin-homology (CH) domain maps to 2 to 108 (AGPRGALLAW…YVSQYYNHFA (107 aa)). Disordered stretches follow at residues 118 to 162 (PRKG…TPSS) and 224 to 659 (SGRS…FPLI). Polar residues predominate over residues 145–162 (ECSSGSLSKQGSHRTPSS). In terms of domain architecture, LIM zinc-binding spans 162-224 (STCAACQQHV…AEHCARLGPS (63 aa)). 2 positions are modified to phosphoserine: serine 292 and serine 306. Phosphothreonine is present on residues threonine 312 and threonine 315. Residues 355 to 366 (LSERTPAPRKDP) show a composition bias toward basic and acidic residues. Pro residues predominate over residues 381–394 (APLPPSSSPGPPPG). Serine 388 bears the Phosphoserine mark. An NPF1 motif is present at residues 419–421 (NPF). The span at 429–445 (PAAPSPAPGPAPTPPES) shows a compositional bias: pro residues. Residues threonine 457 and threonine 459 each carry the phosphothreonine modification. A phosphoserine mark is found at serine 460, serine 461, serine 474, and serine 476. Low complexity-rich tracts occupy residues 495–515 (PSPA…APSE) and 541–553 (SASL…LSSS). Serine 568 and serine 611 each carry phosphoserine. A compositionally biased stretch (polar residues) spans 607 to 618 (PGTSSPQLQVKS). The NPF2 signature appears at 623–625 (NPF). The segment at 642–853 (KGSKPARPPA…TKSKCPGDRS (212 aa)) is mediates the interaction with RAB13 and RAB35 and intramolecular interaction with the CH domain. A bMERB domain is found at 661–808 (RKVQSDQYIP…EEEEDKMLEA (148 aa)). Positions 671 to 701 (EEDIHGEIDTIERQLDALEHRGVLLEEKLRG) form a coiled coil. Residues 690–853 (HRGVLLEEKL…TKSKCPGDRS (164 aa)) form a necessary and sufficient to associate with tubular recycling endosome membranes, mediate phosphatidic acid-binding and membrane tubulation region. Serine 730 bears the Phosphoserine mark. Residues 791–820 (CLDEDRQREEEEDKMLEAMIKKKEFQKETE) adopt a coiled-coil conformation.

Homooligomer. Interacts (via NPF1 motif) with EHD1 (via EH domain); the interaction is direct and probably recruits EHD1 to membranes. Interacts with EHD3 (via EH domain). Interacts with RAB35 (GTP-bound form); the interaction is direct and probably recruits MICALL1 to membranes. Interacts with ACAP2; the interaction is indirect through RAB35. Interacts with RAB8A (GTP-bound form); regulates RAB8A association with recycling endosomes. Interacts with RAB13 (GTP-bound form). Interacts with ARF6 (GTP-bound form). Interacts with PACSIN2 (via the SH3 domain). Interacts with DPYSL2.

It is found in the recycling endosome membrane. Its subcellular location is the late endosome membrane. The protein localises to the cell projection. It localises to the cilium membrane. The protein resides in the cytoplasm. It is found in the cytoskeleton. Its subcellular location is the microtubule organizing center. The protein localises to the centrosome. It localises to the centriole. Its function is as follows. Lipid-binding protein with higher affinity for phosphatidic acid, a lipid enriched in recycling endosome membranes. On endosome membranes, acts as a downstream effector of Rab proteins recruiting cytosolic proteins to regulate membrane tubulation. Involved in a late step of receptor-mediated endocytosis regulating for instance endocytosed-EGF receptor trafficking. Alternatively, regulates slow endocytic recycling of endocytosed proteins back to the plasma membrane. Also involved in cargo protein delivery to the plasma membrane. Plays a role in ciliogenesis coordination, recruits EHD1 to primary cilium where it is anchored to the centriole through interaction with tubulins. May indirectly play a role in neurite outgrowth. The chain is MICAL-like protein 1 (MICALL1) from Bos taurus (Bovine).